Here is an 83-residue protein sequence, read N- to C-terminus: MSSGGLLLLLGLLTLWEGLTPVSSKDRPDFCELPDDRGPCRGIFHAFYYNPDQRQCLEFIYGGCYGNANNFKTIDECERTCAA.

The first 24 residues, 1–24 (MSSGGLLLLLGLLTLWEGLTPVSS), serve as a signal peptide directing secretion. In terms of domain architecture, BPTI/Kunitz inhibitor spans 31–81 (CELPDDRGPCRGIFHAFYYNPDQRQCLEFIYGGCYGNANNFKTIDECERTC). Intrachain disulfides connect C31-C81, C40-C64, and C56-C77.

It belongs to the venom Kunitz-type family. As to expression, expressed by the venom gland.

The protein resides in the secreted. In terms of biological role, serine protease inhibitor. In Tropidechis carinatus (Australian rough-scaled snake), this protein is Kunitz-type serine protease inhibitor carinatin-1.